Here is a 956-residue protein sequence, read N- to C-terminus: Zinc finger CCHC domain-containing protein 14 (956 aa).

Disordered stretches follow at residues 25-50, 78-99, 206-229, 243-276, 361-464, 485-505, 543-583, and 750-786; these read SSLN…PSGA, ALHT…GKHG, SSSS…KVGA, GIPS…GTGS, KEKS…EKEK, PVQN…PQLM, LEER…QGLS, and FYSG…PQPA. The segment covering 29 to 43 has biased composition (gly residues); it reads SGGGGGGGGGGGGKS. Composition is skewed to low complexity over residues 206–225 and 246–265; these read SSSS…PSLP and SSQS…SASL. Polar residues predominate over residues 369–389; it reads LNSSAPSLVTSSGVARVTPTS. A compositionally biased stretch (low complexity) spans 423–432; it reads SSEYSSSSSS. The segment covering 438-464 has biased composition (basic and acidic residues); it reads VREESSDSAEESDRRVDIHVEGTEKEK. Residues 750–768 show a composition bias toward low complexity; it reads FYSGGAGSSSPGNIPASSQ. A CCHC-type zinc finger spans residues 913-930; sequence LSCYNCGATGHRAQDCKQ.

This is Zinc finger CCHC domain-containing protein 14 (Zcchc14) from Mus musculus (Mouse).